The chain runs to 44 residues: Protein PsbN (44 aa).

The helical transmembrane segment at 6 to 26 (FFFTLFLWFFLLSITIYSIYI) threads the bilayer.

This sequence belongs to the PsbN family.

It localises to the plastid. The protein localises to the chloroplast thylakoid membrane. May play a role in photosystem I and II biogenesis. The protein is Protein PsbN of Oedogonium cardiacum (Filamentous green alga).